A 102-amino-acid polypeptide reads, in one-letter code: MGKTGSVEHTKQRIESELMPPSMYKVILNNDDYTPMDFVIEVLARFFDKHEPQATDIMLTIHHQGKGICGVYPFGIAETKVLQVNQFARENQHPLLCTLEKA.

It belongs to the ClpS family. In terms of assembly, binds to the N-terminal domain of the chaperone ClpA.

In terms of biological role, involved in the modulation of the specificity of the ClpAP-mediated ATP-dependent protein degradation. This is ATP-dependent Clp protease adapter protein ClpS from Shewanella denitrificans (strain OS217 / ATCC BAA-1090 / DSM 15013).